A 219-amino-acid polypeptide reads, in one-letter code: MKPATVSPIKIARRGLMLVISSPSGAGKSTIARNLLEADPDLSISVSVTTRSRRPSEIEGRHYFFKSIREFEALRATDSLLEWAEVHGNYYGTPRDAVEKAMGEGRDMLFDIDWQGAQQLQEKMAGDVVSIFILPPSMAELQSRLHRRAEDSEEVIATRLANSRAEIEHWREYDYIVVNDDLDRAFSSVRAIVEAERLRRDRRPGLFEFVNGLLTENPL.

Positions 15-194 (GLMLVISSPS…AFSSVRAIVE (180 aa)) constitute a Guanylate kinase-like domain. 22-29 (SPSGAGKS) is an ATP binding site.

The protein belongs to the guanylate kinase family.

It localises to the cytoplasm. It carries out the reaction GMP + ATP = GDP + ADP. Functionally, essential for recycling GMP and indirectly, cGMP. The polypeptide is Guanylate kinase (Rhizobium meliloti (strain 1021) (Ensifer meliloti)).